A 591-amino-acid chain; its full sequence is Aspartate--tRNA(Asp/Asn) ligase (591 aa).

Glu-174 contributes to the L-aspartate binding site. Positions 198-201 (QLFK) are aspartate. L-aspartate is bound at residue Arg-220. ATP contacts are provided by residues 220-222 (RDE) and Gln-229. His-450 is an L-aspartate binding site. Glu-483 lines the ATP pocket. Position 490 (Arg-490) interacts with L-aspartate. Residue 535–538 (GLDR) coordinates ATP.

It belongs to the class-II aminoacyl-tRNA synthetase family. Type 1 subfamily. Homodimer.

The protein resides in the cytoplasm. The catalysed reaction is tRNA(Asx) + L-aspartate + ATP = L-aspartyl-tRNA(Asx) + AMP + diphosphate. Its function is as follows. Aspartyl-tRNA synthetase with relaxed tRNA specificity since it is able to aspartylate not only its cognate tRNA(Asp) but also tRNA(Asn). Reaction proceeds in two steps: L-aspartate is first activated by ATP to form Asp-AMP and then transferred to the acceptor end of tRNA(Asp/Asn). The chain is Aspartate--tRNA(Asp/Asn) ligase from Azotobacter vinelandii (strain DJ / ATCC BAA-1303).